The primary structure comprises 615 residues: Isocitrate dehydrogenase kinase/phosphatase (615 aa).

Residues 328-334 (APGIRGL) and Lys-349 contribute to the ATP site. Residue Asp-384 is part of the active site. Residues 595–615 (AEPPATPPVKQPDAGPARRVA) form a disordered region.

This sequence belongs to the AceK family.

The protein localises to the cytoplasm. The catalysed reaction is L-seryl-[isocitrate dehydrogenase] + ATP = O-phospho-L-seryl-[isocitrate dehydrogenase] + ADP + H(+). Bifunctional enzyme which can phosphorylate or dephosphorylate isocitrate dehydrogenase (IDH) on a specific serine residue. This is a regulatory mechanism which enables bacteria to bypass the Krebs cycle via the glyoxylate shunt in response to the source of carbon. When bacteria are grown on glucose, IDH is fully active and unphosphorylated, but when grown on acetate or ethanol, the activity of IDH declines drastically concomitant with its phosphorylation. In Cupriavidus taiwanensis (strain DSM 17343 / BCRC 17206 / CCUG 44338 / CIP 107171 / LMG 19424 / R1) (Ralstonia taiwanensis (strain LMG 19424)), this protein is Isocitrate dehydrogenase kinase/phosphatase.